The primary structure comprises 124 residues: MGLYKKVNRNEKRLIRHKRIRKKVFGTAERPRLCVYKSLKYIYAQIIDDEKGHTLVAASSLEPEIKSRLTSTKSIEAAQYIGRVIAERAKEKGITKVVFDRGGYPYHGRVKALADAAREAGLEF.

It belongs to the universal ribosomal protein uL18 family. Part of the 50S ribosomal subunit; part of the 5S rRNA/L5/L18/L25 subcomplex. Contacts the 5S and 23S rRNAs.

Functionally, this is one of the proteins that bind and probably mediate the attachment of the 5S RNA into the large ribosomal subunit, where it forms part of the central protuberance. This Caldicellulosiruptor saccharolyticus (strain ATCC 43494 / DSM 8903 / Tp8T 6331) protein is Large ribosomal subunit protein uL18.